Consider the following 200-residue polypeptide: Imidazoleglycerol-phosphate dehydratase (200 aa).

Belongs to the imidazoleglycerol-phosphate dehydratase family.

Its subcellular location is the cytoplasm. The catalysed reaction is D-erythro-1-(imidazol-4-yl)glycerol 3-phosphate = 3-(imidazol-4-yl)-2-oxopropyl phosphate + H2O. The protein operates within amino-acid biosynthesis; L-histidine biosynthesis; L-histidine from 5-phospho-alpha-D-ribose 1-diphosphate: step 6/9. The protein is Imidazoleglycerol-phosphate dehydratase of Bifidobacterium animalis subsp. lactis (strain AD011).